The chain runs to 124 residues: Insulin-like growth factor 1 (124 aa).

A propeptide spanning residues 1–19 (IHFFYLGLCLLTLTSSAAA) is cleaved from the precursor. The interval 20 to 48 (GPETLCGAELVDALQFVCGDRGFYFSKPT) is b. 3 disulfide bridges follow: Cys-25/Cys-67, Cys-37/Cys-80, and Cys-66/Cys-71. The c stretch occupies residues 49 to 60 (GYGSSSRRLHHK). Residues 61-81 (GIVDECCFQSCDLRRLEMYCA) form an a region. Positions 82–89 (PIKPPKSA) are d. The tract at residues 86 to 124 (PKSARSVRAQRHTDMPKAQKEVHLKNTSRGNTGNRNYRM) is disordered. The propeptide at 90–124 (RSVRAQRHTDMPKAQKEVHLKNTSRGNTGNRNYRM) is e peptide. Over residues 96-109 (RHTDMPKAQKEVHL) the composition is skewed to basic and acidic residues. Residues 110–124 (KNTSRGNTGNRNYRM) are compositionally biased toward polar residues.

This sequence belongs to the insulin family.

It is found in the secreted. Its function is as follows. The insulin-like growth factors, isolated from plasma, are structurally and functionally related to insulin but have a much higher growth-promoting activity. Acts as a ligand for IGF1R. Binds to the alpha subunit of IGF1R, leading to the activation of the intrinsic tyrosine kinase activity which autophosphorylates tyrosine residues in the beta subunit thus initiatiating a cascade of down-stream signaling events leading to activation of the PI3K-AKT/PKB and the Ras-MAPK pathways. Binds to integrins. Its binding to integrins and subsequent ternary complex formation with integrins and IGFR1 are essential for IGF1 signaling. The polypeptide is Insulin-like growth factor 1 (Coturnix japonica (Japanese quail)).